The following is a 126-amino-acid chain: MRWSCHPMSSVTSRLRSATADTFALVVYCFFTGMAIEILLSGMSLQQSLSSRVLAIPVNVIIAWPFGQYRDAVVSLASRHGPKQFWTRNLADLLAMSVFNHRSMRRFFLRWGWSGGSCSRRWSAMR.

Residues 23–43 (FALVVYCFFTGMAIEILLSGM) form a helical membrane-spanning segment.

This sequence belongs to the AlaE exporter family.

It is found in the cell inner membrane. Functionally, exports L-alanine. The polypeptide is L-alanine exporter AlaE (Sodalis glossinidius (strain morsitans)).